The sequence spans 634 residues: Probable potassium transport system protein Kup (634 aa).

12 helical membrane-spanning segments follow: residues 21–41 (LVIG…LYTL), 58–78 (VLGI…LKYV), 110–130 (MYVV…DGVI), 147–167 (APKL…MLFL), 179–199 (AFGP…VYNM), 223–243 (WHAV…EALY), 258–278 (WQFV…ALVL), 296–316 (ALYP…QALI), 348–368 (IYVP…VIGF), 377–397 (AYGV…IIYA), 403–423 (VPAP…CAFF), and 427–447 (IIKF…LFTL).

This sequence belongs to the HAK/KUP transporter (TC 2.A.72) family.

The protein resides in the cell inner membrane. It catalyses the reaction K(+)(in) + H(+)(in) = K(+)(out) + H(+)(out). Transport of potassium into the cell. Likely operates as a K(+):H(+) symporter. In Xanthomonas axonopodis pv. citri (strain 306), this protein is Probable potassium transport system protein Kup.